Here is a 196-residue protein sequence, read N- to C-terminus: uncharacterized protein (196 aa).

Residues 71–87 (YVKLIGTGCYVAILISG) form a helical membrane-spanning segment.

The protein resides in the membrane. This is an uncharacterized protein from Dictyostelium discoideum (Social amoeba).